The following is a 792-amino-acid chain: Lon protease (792 aa).

A Lon N-terminal domain is found at D16–L211. G361–T368 lines the ATP pocket. The 182-residue stretch at T597–P778 folds into the Lon proteolytic domain. Catalysis depends on residues S684 and K727.

Belongs to the peptidase S16 family. Homohexamer. Organized in a ring with a central cavity.

The protein localises to the cytoplasm. It carries out the reaction Hydrolysis of proteins in presence of ATP.. In terms of biological role, ATP-dependent serine protease that mediates the selective degradation of mutant and abnormal proteins as well as certain short-lived regulatory proteins. Required for cellular homeostasis and for survival from DNA damage and developmental changes induced by stress. Degrades polypeptides processively to yield small peptide fragments that are 5 to 10 amino acids long. Binds to DNA in a double-stranded, site-specific manner. The chain is Lon protease from Phenylobacterium zucineum (strain HLK1).